We begin with the raw amino-acid sequence, 1261 residues long: SNF2 domain-containing protein CLASSY 2 (1261 aa).

Positions 458 to 479 (FQKRTSRSSRSVAPKTEDSDEP) are disordered. One can recognise a Helicase ATP-binding domain in the interval 704–904 (DPTSGNIGGC…FNTLCLARPK (201 aa)). 717–724 (HSPGAGKT) serves as a coordination point for ATP. The DEAH box motif lies at 855–858 (DEGH). The 166-residue stretch at 1067-1232 (FVLNLIFRVV…DPSLWQAEKI (166 aa)) folds into the Helicase C-terminal domain.

This sequence belongs to the helicase family. As to quaternary structure, interacts with NRPD1 and SHH1.

It localises to the nucleus. Its function is as follows. Probable chromatin remodeling factor. The polypeptide is SNF2 domain-containing protein CLASSY 2 (CLSY2) (Arabidopsis thaliana (Mouse-ear cress)).